A 421-amino-acid chain; its full sequence is Enolase (421 aa).

Catalysis depends on E207, which acts as the Proton donor. Mg(2+) contacts are provided by D244, E285, and D312. The active-site Proton acceptor is K337. K337, R366, S367, and K388 together coordinate (2R)-2-phosphoglycerate.

It belongs to the enolase family. Requires Mg(2+) as cofactor.

The protein resides in the cytoplasm. It localises to the secreted. Its subcellular location is the cell surface. The catalysed reaction is (2R)-2-phosphoglycerate = phosphoenolpyruvate + H2O. The protein operates within carbohydrate degradation; glycolysis; pyruvate from D-glyceraldehyde 3-phosphate: step 4/5. In terms of biological role, catalyzes the reversible conversion of 2-phosphoglycerate (2-PG) into phosphoenolpyruvate (PEP). It is essential for the degradation of carbohydrates via glycolysis. In Ehrlichia ruminantium (strain Gardel), this protein is Enolase.